Here is a 222-residue protein sequence, read N- to C-terminus: Probable septum site-determining protein MinC (222 aa).

The protein belongs to the MinC family. As to quaternary structure, interacts with MinD and FtsZ.

In terms of biological role, cell division inhibitor that blocks the formation of polar Z ring septums. Rapidly oscillates between the poles of the cell to destabilize FtsZ filaments that have formed before they mature into polar Z rings. Prevents FtsZ polymerization. This Lysinibacillus sphaericus (strain C3-41) protein is Probable septum site-determining protein MinC.